The sequence spans 119 residues: Immunoglobulin lambda variable 2-11 (119 aa).

An N-terminal signal peptide occupies residues 1–19 (MAWALLLLSLLTQGTGSWA). Pyrrolidone carboxylic acid is present on Gln20. Residues 20-44 (QSALTQPRSVSGSPGQSVTISCTGT) form a framework-1 region. An Ig-like domain is found at 20–119 (QSALTQPRSV…CSYAGSYTFH (100 aa)). Cys41 and Cys109 are joined by a disulfide. The segment at 45-53 (SSDVGGYNY) is complementarity-determining-1. A framework-2 region spans residues 54 to 70 (VSWYQQHPGKAPKLMIY). A complementarity-determining-2 region spans residues 71 to 73 (DVS). Residues 74 to 109 (KRPSGVPDRFSGSKSGNTASLTISGLQAEDEADYYC) are framework-3. The interval 110–119 (CSYAGSYTFH) is complementarity-determining-3.

In terms of assembly, immunoglobulins are composed of two identical heavy chains and two identical light chains; disulfide-linked.

The protein localises to the secreted. Its subcellular location is the cell membrane. Its function is as follows. V region of the variable domain of immunoglobulin light chains that participates in the antigen recognition. Immunoglobulins, also known as antibodies, are membrane-bound or secreted glycoproteins produced by B lymphocytes. In the recognition phase of humoral immunity, the membrane-bound immunoglobulins serve as receptors which, upon binding of a specific antigen, trigger the clonal expansion and differentiation of B lymphocytes into immunoglobulins-secreting plasma cells. Secreted immunoglobulins mediate the effector phase of humoral immunity, which results in the elimination of bound antigens. The antigen binding site is formed by the variable domain of one heavy chain, together with that of its associated light chain. Thus, each immunoglobulin has two antigen binding sites with remarkable affinity for a particular antigen. The variable domains are assembled by a process called V-(D)-J rearrangement and can then be subjected to somatic hypermutations which, after exposure to antigen and selection, allow affinity maturation for a particular antigen. This Homo sapiens (Human) protein is Immunoglobulin lambda variable 2-11.